The sequence spans 100 residues: Small ubiquitin-related modifier 1 (100 aa).

A compositionally biased stretch (basic and acidic residues) spans 1 to 12; the sequence is MSANQEEDKKPG. The interval 1-21 is disordered; sequence MSANQEEDKKPGDGGAHINLK. The Ubiquitin-like domain occupies 16–93; that stretch reads AHINLKVKGQ…IDAMLHQTGG (78 aa). A Glycyl lysine isopeptide (Gly-Lys) (interchain with K-? in acceptor proteins) cross-link involves residue Gly93.

It belongs to the ubiquitin family. SUMO subfamily. In terms of assembly, interacts with SAE2, SCE1, SIZ1 and MMS21. Interacts with HSFA2. Covalently attached to ABI5, FLD, GTE3, HSFA2 and ICE1.

Its subcellular location is the nucleus. It is found in the cytoplasm. Ubiquitin-like protein which can be covalently attached to target lysines as a monomer. Does not seem to be involved in protein degradation and may function as an antagonist of ubiquitin in the degradation process. Required for the massive protein sumoylation in the nucleus induced by heat shock and controlled by SIZ1. Involved in the regulation of the heat stress transcription factor HSFA2 in acquired thermotolerance. This is Small ubiquitin-related modifier 1 from Arabidopsis thaliana (Mouse-ear cress).